The following is a 144-amino-acid chain: Large ribosomal subunit protein uL15 (144 aa).

Positions 1 to 14 (MKLHELKPNEGARD) are enriched in basic and acidic residues. Positions 1–43 (MKLHELKPNEGARDVRKRVGRGTSSGTGKTAGRGQKGQKARSK) are disordered. Residues 23–35 (TSSGTGKTAGRGQ) show a composition bias toward gly residues.

The protein belongs to the universal ribosomal protein uL15 family. In terms of assembly, part of the 50S ribosomal subunit.

Its function is as follows. Binds to the 23S rRNA. The protein is Large ribosomal subunit protein uL15 of Latilactobacillus sakei subsp. sakei (strain 23K) (Lactobacillus sakei subsp. sakei).